A 258-amino-acid polypeptide reads, in one-letter code: Proteasome subunit alpha type-3 (258 aa).

Glycyl lysine isopeptide (Lys-Gly) (interchain with G-Cter in ubiquitin) cross-links involve residues Lys100, Lys199, and Lys231.

This sequence belongs to the peptidase T1A family. The 26S proteasome consists of a 20S proteasome core and two 19S regulatory subunits. The 20S proteasome core is composed of 28 subunits that are arranged in four stacked rings, resulting in a barrel-shaped structure. The two end rings are each formed by seven alpha subunits, and the two central rings are each formed by seven beta subunits. The catalytic chamber with the active sites is on the inside of the barrel.

The protein localises to the cytoplasm. It is found in the nucleus. In terms of biological role, the proteasome degrades poly-ubiquitinated proteins in the cytoplasm and in the nucleus. It is essential for the regulated turnover of proteins and for the removal of misfolded proteins. The proteasome is a multicatalytic proteinase complex that is characterized by its ability to cleave peptides with Arg, Phe, Tyr, Leu, and Glu adjacent to the leaving group at neutral or slightly basic pH. It has an ATP-dependent proteolytic activity. This Saccharomyces cerevisiae (strain ATCC 204508 / S288c) (Baker's yeast) protein is Proteasome subunit alpha type-3 (PRE9).